The primary structure comprises 264 residues: uncharacterized protein (264 aa).

8 to 15 provides a ligand contact to ATP; sequence IQGGTGKT.

This is an uncharacterized protein from Methanocaldococcus jannaschii (strain ATCC 43067 / DSM 2661 / JAL-1 / JCM 10045 / NBRC 100440) (Methanococcus jannaschii).